The primary structure comprises 275 residues: 2-dehydro-3-deoxyphosphooctonate aldolase (275 aa).

This sequence belongs to the KdsA family.

Its subcellular location is the cytoplasm. The catalysed reaction is D-arabinose 5-phosphate + phosphoenolpyruvate + H2O = 3-deoxy-alpha-D-manno-2-octulosonate-8-phosphate + phosphate. It functions in the pathway carbohydrate biosynthesis; 3-deoxy-D-manno-octulosonate biosynthesis; 3-deoxy-D-manno-octulosonate from D-ribulose 5-phosphate: step 2/3. It participates in bacterial outer membrane biogenesis; lipopolysaccharide biosynthesis. The sequence is that of 2-dehydro-3-deoxyphosphooctonate aldolase from Protochlamydia amoebophila (strain UWE25).